Reading from the N-terminus, the 200-residue chain is MAKVLVLYYSSYGHVETMAQHIVEGAKSVPGVEVTLKRVPETIPVDQARAIGVKVDQAAPVATVDELADYDAIIFGTPTRFGNMAGQMRTFLDQTGGLWMKGALVGKIGSVFASTGTQHGGQETTITSFHTTLLHHGMVIVGVPYACSGLVNMNEITGGTPYGATTLAGADGSRQPSANELDIARYQGKHVAELASKLAS.

Residues 4–191 form the Flavodoxin-like domain; it reads VLVLYYSSYG…DIARYQGKHV (188 aa). FMN contacts are provided by residues 10-15 and 79-81; these read SSYGHV and TRF. Tyr-12 contributes to the NAD(+) binding site. A substrate-binding site is contributed by Trp-99. Residues 114-120 and His-135 contribute to the FMN site; that span reads STGTQHG.

This sequence belongs to the WrbA family. FMN serves as cofactor.

The enzyme catalyses a quinone + NADH + H(+) = a quinol + NAD(+). The catalysed reaction is a quinone + NADPH + H(+) = a quinol + NADP(+). The chain is NAD(P)H dehydrogenase (quinone) from Burkholderia orbicola (strain MC0-3).